Here is a 476-residue protein sequence, read N- to C-terminus: RNA-splicing ligase RtcB homolog (476 aa).

5 residues coordinate Mn(2+): D90, C93, H198, H230, and H324. GMP is bound at residue N197–E201. Residues H324–N325, G373–M376, S380, H399–G402, and K475 contribute to the GMP site. Residue H399 is the GMP-histidine intermediate of the active site.

The protein belongs to the RtcB family. Catalytic component of the tRNA-splicing ligase complex. Requires Mn(2+) as cofactor.

The enzyme catalyses a 3'-end 3'-phospho-ribonucleotide-RNA + a 5'-end dephospho-ribonucleoside-RNA + GTP = a ribonucleotidyl-ribonucleotide-RNA + GMP + diphosphate. It carries out the reaction a 3'-end 2',3'-cyclophospho-ribonucleotide-RNA + a 5'-end dephospho-ribonucleoside-RNA + GTP + H2O = a ribonucleotidyl-ribonucleotide-RNA + GMP + diphosphate + H(+). Functionally, catalytic subunit of the tRNA-splicing ligase complex that acts by directly joining spliced tRNA halves to mature-sized tRNAs by incorporating the precursor-derived splice junction phosphate into the mature tRNA as a canonical 3',5'-phosphodiester. May act as an RNA ligase with broad substrate specificity, and may function toward other RNAs. The sequence is that of RNA-splicing ligase RtcB homolog from Chlamydomonas reinhardtii (Chlamydomonas smithii).